The chain runs to 1325 residues: uncharacterized protein (1325 aa).

The signal sequence occupies residues 1–27 (MHTFTRKVKWPFMFTAIGLTFGIVAVA). Residue cysteine 28 is the site of N-palmitoyl cysteine attachment. Cysteine 28 is lipidated: S-diacylglycerol cysteine. Disordered regions lie at residues 379-402 (RAASSSSEGTIQLKTASDGGGTTQ) and 430-464 (NTNANQTGGGGSGGGGGTSTGSSTGSSTETTTGNS). The span at 436 to 448 (TGGGGSGGGGGTS) shows a compositional bias: gly residues. Positions 449–464 (TGSSTGSSTETTTGNS) are enriched in low complexity.

It belongs to the MG307/MG309/MG338 family.

The protein resides in the cell membrane. This is an uncharacterized protein from Mycoplasma pneumoniae (strain ATCC 29342 / M129 / Subtype 1) (Mycoplasmoides pneumoniae).